The following is a 116-amino-acid chain: Phosphoribosyl-AMP cyclohydrolase (116 aa).

Aspartate 85 lines the Mg(2+) pocket. Cysteine 86 is a Zn(2+) binding site. Positions 87 and 89 each coordinate Mg(2+). Residues cysteine 102 and cysteine 109 each coordinate Zn(2+).

This sequence belongs to the PRA-CH family. In terms of assembly, homodimer. The cofactor is Mg(2+). It depends on Zn(2+) as a cofactor.

It localises to the cytoplasm. It catalyses the reaction 1-(5-phospho-beta-D-ribosyl)-5'-AMP + H2O = 1-(5-phospho-beta-D-ribosyl)-5-[(5-phospho-beta-D-ribosylamino)methylideneamino]imidazole-4-carboxamide. The protein operates within amino-acid biosynthesis; L-histidine biosynthesis; L-histidine from 5-phospho-alpha-D-ribose 1-diphosphate: step 3/9. Catalyzes the hydrolysis of the adenine ring of phosphoribosyl-AMP. The polypeptide is Phosphoribosyl-AMP cyclohydrolase (Corynebacterium diphtheriae (strain ATCC 700971 / NCTC 13129 / Biotype gravis)).